The chain runs to 553 residues: Protein PNS1 (553 aa).

The disordered stretch occupies residues 1–53 (MFGEGNKPTEPVPAYDAGQDPFQGPNASKNQYQGSAADYNGAPPPPASQPGNQ). Topologically, residues 1 to 94 (MFGEGNKPTE…EDSKPKWNDW (94 aa)) are cytoplasmic. Residues 25–34 (PNASKNQYQG) are compositionally biased toward polar residues. Residues 95–115 (PFTIFFAGCVIAFIVVAAITL) traverse the membrane as a helical segment. Over 116–142 (RAWSQNSSSQGSGVYDGANTGTLTTNS) the chain is Extracellular. Asn-121 is a glycosylation site (N-linked (GlcNAc...) asparagine). A helical transmembrane segment spans residues 143 to 163 (AIMLAISCIIAFVFSIIGIVL). Residues 164 to 169 (ARMFPK) are Cytoplasmic-facing. The helical transmembrane segment at 170–190 (FFIIAGILFNIIAGLATAIMY) threads the bilayer. The Extracellular segment spans residues 191–192 (LS). Residues 193–213 (LKYYSAGIVFLVFTAICALFY) traverse the membrane as a helical segment. Topologically, residues 214 to 241 (WRMRHRIPFTVAVLKTVMDVMKSYPQTW) are cytoplasmic. A helical transmembrane segment spans residues 242-262 (FVTLIGSIIATAFSILFSAVI). The Extracellular portion of the chain corresponds to 263-287 (VATYMKYDDKANNPGCSTNGGSCSN). Residues 288 to 308 (AKLIGLLVLVFFCGYYIAEVI) form a helical membrane-spanning segment. The Cytoplasmic portion of the chain corresponds to 309–349 (RNVIHCTVSGIFGAWYYFSKSDQGMPKWPGFGALKRSLTYS). Residues 350–370 (FGSICFGSLIVTIIETLKAVL) traverse the membrane as a helical segment. At 371–385 (RLAVDGVMGGGGADN) the chain is on the extracellular side. Residues 386–406 (GWMQCLALIANWIFSFLEWLA) form a helical membrane-spanning segment. Residues 407-450 (RYFNHYAYVFIALYGKPYLRAAKETWYMLREKGIDALINDNLVN) lie on the Cytoplasmic side of the membrane. The helical transmembrane segment at 451–471 (VALSFFTLFTCYITTLFAYLY) threads the bilayer. The Extracellular segment spans residues 472-484 (LRYTDPNYNDNNN). A helical membrane pass occupies residues 485–505 (FTPALMAFAFVIAMEICNVIT). Residues 506-553 (ETIRSGTATFFVALGNDPEVFHLSYPERFDEIFRAYPEVLKKLSHQNV) lie on the Cytoplasmic side of the membrane.

The protein belongs to the CTL (choline transporter-like) family.

The protein resides in the cell membrane. Probably involved in transport through the plasma membrane. This chain is Protein PNS1 (PNS1), found in Kluyveromyces lactis (strain ATCC 8585 / CBS 2359 / DSM 70799 / NBRC 1267 / NRRL Y-1140 / WM37) (Yeast).